The following is a 212-amino-acid chain: 3-demethoxyubiquinol 3-hydroxylase (212 aa).

The tract at residues 21–42 is disordered; that stretch reads SRMSRPLPVPQESAVTEAAPEL. Residues Glu61, Glu91, His94, Glu143, Glu175, and His178 each coordinate Fe cation.

The protein belongs to the COQ7 family. Fe cation is required as a cofactor.

It is found in the cell membrane. It catalyses the reaction a 5-methoxy-2-methyl-3-(all-trans-polyprenyl)benzene-1,4-diol + AH2 + O2 = a 3-demethylubiquinol + A + H2O. The protein operates within cofactor biosynthesis; ubiquinone biosynthesis. Catalyzes the hydroxylation of 2-nonaprenyl-3-methyl-6-methoxy-1,4-benzoquinol during ubiquinone biosynthesis. This Paraburkholderia xenovorans (strain LB400) protein is 3-demethoxyubiquinol 3-hydroxylase.